Consider the following 379-residue polypeptide: Lipid-A-disaccharide synthase (379 aa).

Belongs to the LpxB family.

It catalyses the reaction a lipid X + a UDP-2-N,3-O-bis[(3R)-3-hydroxyacyl]-alpha-D-glucosamine = a lipid A disaccharide + UDP + H(+). The protein operates within bacterial outer membrane biogenesis; LPS lipid A biosynthesis. Its function is as follows. Condensation of UDP-2,3-diacylglucosamine and 2,3-diacylglucosamine-1-phosphate to form lipid A disaccharide, a precursor of lipid A, a phosphorylated glycolipid that anchors the lipopolysaccharide to the outer membrane of the cell. The protein is Lipid-A-disaccharide synthase of Persephonella marina (strain DSM 14350 / EX-H1).